The following is a 383-amino-acid chain: tRNA(Met) cytidine acetate ligase (383 aa).

Residues 7–20, G101, N153, and 178–179 each bind ATP; these read IAEF…HEFL and RI.

The protein belongs to the TmcAL family.

Its subcellular location is the cytoplasm. The enzyme catalyses cytidine(34) in elongator tRNA(Met) + acetate + ATP = N(4)-acetylcytidine(34) in elongator tRNA(Met) + AMP + diphosphate. Its function is as follows. Catalyzes the formation of N(4)-acetylcytidine (ac(4)C) at the wobble position of elongator tRNA(Met), using acetate and ATP as substrates. First activates an acetate ion to form acetyladenylate (Ac-AMP) and then transfers the acetyl group to tRNA to form ac(4)C34. This Lactobacillus helveticus (strain DPC 4571) protein is tRNA(Met) cytidine acetate ligase.